The chain runs to 699 residues: MAREYKIEDYRNFGIMAHIDAGKTTTTERILYYTGKSHKIGEVHDGAATMDWMEQEQERGITITSAATTTFWKGRDGKMRRFNIIDTPGHVDFTIEVERSLRVLDGAIALLDANAGVEPQTETVWRQAEKYNVPRMIFCNKMDKTGADFYRSVEMIKTRLGATAVVMQLPIGAESDFKGVIDLVEMNALIWRDESLGAQWDVVEIPEDLKAKAEEYREKLIETVVEIDEAAMEAYLEGNMPDNDKIRELVRRGTIDVKFHPMFCGTAFKNKGVQPLLDAVVDYLPSPLDIPAIKGIDFKTEADIERHADDAEPLSMLAFKIMNDPFVGSLTFARIYSGKLEKGSSVLNTVKDKRERVGRMLQMHSNSREDIEEAFAGDIVALAGLKETTTGDTLCDPLKPVILERMEFPEPVIQIAIEPKSKGDQEKMGLALNRLAAEDPSFRVKTDQESGQTIIAGMGELHLDIIVDRMRREFKVEANVGAPQVAYRETITRQTEEDYTHKKQTGGTGQFARVKIIFEPNPEGEDFKFESKIVGGSVPKEYIPGVQKGIESVLSSGPLAGFPMLGVKATLIDGAFHDVDSSVLAFEIASRACFREAAKKAGAQLLEPMMKVEVVTPEDYVGDVIGDLNSRRGQIQGQETRGIAVVISANVPLANMFKYVDNLRSMSQGRAQYTMTFDHYAPVPSNVATEIQAKYSGQK.

The tr-type G domain occupies 8 to 288 (EDYRNFGIMA…AVVDYLPSPL (281 aa)). Residues 17 to 24 (AHIDAGKT), 86 to 90 (DTPGH), and 140 to 143 (NKMD) contribute to the GTP site.

Belongs to the TRAFAC class translation factor GTPase superfamily. Classic translation factor GTPase family. EF-G/EF-2 subfamily.

The protein localises to the cytoplasm. Catalyzes the GTP-dependent ribosomal translocation step during translation elongation. During this step, the ribosome changes from the pre-translocational (PRE) to the post-translocational (POST) state as the newly formed A-site-bound peptidyl-tRNA and P-site-bound deacylated tRNA move to the P and E sites, respectively. Catalyzes the coordinated movement of the two tRNA molecules, the mRNA and conformational changes in the ribosome. The polypeptide is Elongation factor G (Rhizobium etli (strain CIAT 652)).